We begin with the raw amino-acid sequence, 276 residues long: Large ribosomal subunit protein uL2 (276 aa).

The segment at 225-276 (MNPNDHPHGGGEGRNPIGRNPVTPWGKPALGAKTRKKKHPSNRFIVKRRGKK) is disordered. The span at 257–276 (KTRKKKHPSNRFIVKRRGKK) shows a compositional bias: basic residues.

The protein belongs to the universal ribosomal protein uL2 family. In terms of assembly, part of the 50S ribosomal subunit. Forms a bridge to the 30S subunit in the 70S ribosome.

In terms of biological role, one of the primary rRNA binding proteins. Required for association of the 30S and 50S subunits to form the 70S ribosome, for tRNA binding and peptide bond formation. It has been suggested to have peptidyltransferase activity; this is somewhat controversial. Makes several contacts with the 16S rRNA in the 70S ribosome. The protein is Large ribosomal subunit protein uL2 of Desulfitobacterium hafniense (strain Y51).